We begin with the raw amino-acid sequence, 183 residues long: UPF0316 protein BcerKBAB4_3093 (183 aa).

3 helical membrane-spanning segments follow: residues 6-26 (LIFVLQIIYVPTLTIRTILLV), 32-52 (SAAGVGLLEGAIYIVSLGIVF), and 58-78 (WMNIVAYVIGFSAGLLLGGYI).

This sequence belongs to the UPF0316 family.

The protein resides in the cell membrane. This chain is UPF0316 protein BcerKBAB4_3093, found in Bacillus mycoides (strain KBAB4) (Bacillus weihenstephanensis).